A 320-amino-acid chain; its full sequence is Acetyl-coenzyme A carboxylase carboxyl transferase subunit alpha (320 aa).

In terms of domain architecture, CoA carboxyltransferase C-terminal spans 33-294 (AFDTEIQALR…GDAVEDELKA (262 aa)).

The protein belongs to the AccA family. In terms of assembly, acetyl-CoA carboxylase is a heterohexamer composed of biotin carboxyl carrier protein (AccB), biotin carboxylase (AccC) and two subunits each of ACCase subunit alpha (AccA) and ACCase subunit beta (AccD).

It is found in the cytoplasm. The catalysed reaction is N(6)-carboxybiotinyl-L-lysyl-[protein] + acetyl-CoA = N(6)-biotinyl-L-lysyl-[protein] + malonyl-CoA. The protein operates within lipid metabolism; malonyl-CoA biosynthesis; malonyl-CoA from acetyl-CoA: step 1/1. Its function is as follows. Component of the acetyl coenzyme A carboxylase (ACC) complex. First, biotin carboxylase catalyzes the carboxylation of biotin on its carrier protein (BCCP) and then the CO(2) group is transferred by the carboxyltransferase to acetyl-CoA to form malonyl-CoA. In Caulobacter vibrioides (strain ATCC 19089 / CIP 103742 / CB 15) (Caulobacter crescentus), this protein is Acetyl-coenzyme A carboxylase carboxyl transferase subunit alpha.